The following is a 459-amino-acid chain: MNRLPSSASALACSAHALNLIEKRTLNHEEMKALNREVIDYFKEHVNPGFLEYRKSVTAGGDYGAVEWQAGSLNTLVDTQGQEFIDCLGGFGIFNVGHRNPVVVSAVQNQLAKQPLHSQELLDPLRAMLAKTLAALAPGKLKYSFFCNSGTESVEAALKLAKAYQSPRGKFTFIATSGAFHGKSLGALSATAKSTFRRPFMPLLPGFRHVPFGNIDAMSMAFSEGKKTGDEIAAVILEPIQGEGGVILPPQGYLTEVRKLCDEFGALMILDEVQTGMGRTGKMFACEHENVQPDILCLAKALGGGVMPIGATIATEEVFSVLFDNPFLHTTTFGGNPLACAAALATINVLLEQNLPAQAEQKGDTLLDGFRQLAREYPNLVHDARGKGMLMAIEFVDNETGYRFASEMFRQRVLVAGTLNNAKTTRIEPPLTLTIELCEQVLKSARNALAAMQVSVEEV.

Residues 150–151 (GT) and Q274 each bind pyridoxal 5'-phosphate. At K300 the chain carries N6-(pyridoxal phosphate)lysine. A pyridoxal 5'-phosphate-binding site is contributed by T332.

This sequence belongs to the class-III pyridoxal-phosphate-dependent aminotransferase family. Putrescine aminotransferase subfamily. It depends on pyridoxal 5'-phosphate as a cofactor.

It carries out the reaction an alkane-alpha,omega-diamine + 2-oxoglutarate = an omega-aminoaldehyde + L-glutamate. The enzyme catalyses putrescine + 2-oxoglutarate = 1-pyrroline + L-glutamate + H2O. The catalysed reaction is cadaverine + 2-oxoglutarate = 5-aminopentanal + L-glutamate. It participates in amine and polyamine degradation; putrescine degradation; 4-aminobutanal from putrescine (transaminase route): step 1/1. Functionally, catalyzes the aminotransferase reaction from putrescine to 2-oxoglutarate, leading to glutamate and 4-aminobutanal, which spontaneously cyclizes to form 1-pyrroline. This is the first step in one of two pathways for putrescine degradation, where putrescine is converted into 4-aminobutanoate (gamma-aminobutyrate or GABA) via 4-aminobutanal. Also functions as a cadaverine transaminase in a a L-lysine degradation pathway to succinate that proceeds via cadaverine, glutarate and L-2-hydroxyglutarate. The chain is Putrescine aminotransferase from Salmonella paratyphi B (strain ATCC BAA-1250 / SPB7).